The chain runs to 146 residues: Large ribosomal subunit protein uL13 (146 aa).

Belongs to the universal ribosomal protein uL13 family. As to quaternary structure, part of the 50S ribosomal subunit.

In terms of biological role, this protein is one of the early assembly proteins of the 50S ribosomal subunit, although it is not seen to bind rRNA by itself. It is important during the early stages of 50S assembly. The protein is Large ribosomal subunit protein uL13 of Bdellovibrio bacteriovorus (strain ATCC 15356 / DSM 50701 / NCIMB 9529 / HD100).